Reading from the N-terminus, the 380-residue chain is MEDNFRNVLIILSAIVITAIFIHGLWTLRKQKNPYKLKTSKDKADPITRDFDRKGFDQDGVGQVKVKPSAENDKINLENEAVTEHFITEGIQLPDDLSKSQIIIKNDVLGDLAGQTSKAKQEELDNNSIQELDSSLEDDWFKEDNSGQFSKGELGDELTPAPAVEKVKKKPTKPKAVHIEPLYEQPVTQAKPARTPINKVSKTPSKATLKRDQIEIDFDNQMSEQAAAPKKIKTQLEPQVIILSVVMPANQQMLGAALLPSLLTLGLKYGEMNIFHRHEDNAGKGKVTFSLANIMNPGSFDLDNMENFATRGVSLFMTLPNAGDPFSVFEQMLNAAKQLAQEFNAQVLDDKRNVMTKQTEQHYLSKIREFDRKSRIALVE.

The Periplasmic portion of the chain corresponds to 1 to 7; sequence MEDNFRN. The helical transmembrane segment at 8–28 threads the bilayer; it reads VLIILSAIVITAIFIHGLWTL. Over 29–380 the chain is Cytoplasmic; it reads RKQKNPYKLK…DRKSRIALVE (352 aa).

The protein belongs to the ZipA family. In terms of assembly, interacts with FtsZ via their C-terminal domains.

It is found in the cell inner membrane. Functionally, essential cell division protein that stabilizes the FtsZ protofilaments by cross-linking them and that serves as a cytoplasmic membrane anchor for the Z ring. Also required for the recruitment to the septal ring of downstream cell division proteins. This Colwellia psychrerythraea (strain 34H / ATCC BAA-681) (Vibrio psychroerythus) protein is Cell division protein ZipA.